A 224-amino-acid polypeptide reads, in one-letter code: 7-cyano-7-deazaguanine synthase (224 aa).

Residue 7-17 (LSGGLDSSTIL) coordinates ATP. Zn(2+)-binding residues include cysteine 191, cysteine 199, cysteine 202, and cysteine 205.

Belongs to the QueC family. Zn(2+) is required as a cofactor.

The enzyme catalyses 7-carboxy-7-deazaguanine + NH4(+) + ATP = 7-cyano-7-deazaguanine + ADP + phosphate + H2O + H(+). The protein operates within purine metabolism; 7-cyano-7-deazaguanine biosynthesis. In terms of biological role, catalyzes the ATP-dependent conversion of 7-carboxy-7-deazaguanine (CDG) to 7-cyano-7-deazaguanine (preQ(0)). The polypeptide is 7-cyano-7-deazaguanine synthase (Nostoc punctiforme (strain ATCC 29133 / PCC 73102)).